The sequence spans 559 residues: 2-isopropylmalate synthase (559 aa).

The Pyruvate carboxyltransferase domain maps to 30–304 (PLWAAVDLRD…DPGIDFSRMK (275 aa)). Mg(2+)-binding residues include D39, H243, H245, and N279. Residues 436-559 (VPMGWVLRSY…ETSEQLIANS (124 aa)) are regulatory domain.

This sequence belongs to the alpha-IPM synthase/homocitrate synthase family. LeuA type 2 subfamily. In terms of assembly, homodimer. Requires Mg(2+) as cofactor.

It is found in the cytoplasm. The enzyme catalyses 3-methyl-2-oxobutanoate + acetyl-CoA + H2O = (2S)-2-isopropylmalate + CoA + H(+). The protein operates within amino-acid biosynthesis; L-leucine biosynthesis; L-leucine from 3-methyl-2-oxobutanoate: step 1/4. Functionally, catalyzes the condensation of the acetyl group of acetyl-CoA with 3-methyl-2-oxobutanoate (2-ketoisovalerate) to form 3-carboxy-3-hydroxy-4-methylpentanoate (2-isopropylmalate). The protein is 2-isopropylmalate synthase of Alcanivorax borkumensis (strain ATCC 700651 / DSM 11573 / NCIMB 13689 / SK2).